The chain runs to 172 residues: UPF0114 protein PMI3225 (172 aa).

Helical transmembrane passes span 15 to 35, 57 to 77, 108 to 128, and 136 to 156; these read LFAP…IKFF, LLSL…IFSG, KVAA…FMDL, and LLWY…MGYL.

It belongs to the UPF0114 family.

Its subcellular location is the cell membrane. This Proteus mirabilis (strain HI4320) protein is UPF0114 protein PMI3225.